The sequence spans 507 residues: Cobyric acid synthase (507 aa).

The region spanning 251 to 448 (DIDIAVVHLP…LHGLFDSDAF (198 aa)) is the GATase cobBQ-type domain. C332 functions as the Nucleophile in the catalytic mechanism. The active site involves H440.

The protein belongs to the CobB/CobQ family. CobQ subfamily.

Its pathway is cofactor biosynthesis; adenosylcobalamin biosynthesis. Catalyzes amidations at positions B, D, E, and G on adenosylcobyrinic A,C-diamide. NH(2) groups are provided by glutamine, and one molecule of ATP is hydrogenolyzed for each amidation. The polypeptide is Cobyric acid synthase (Klebsiella pneumoniae subsp. pneumoniae (strain ATCC 700721 / MGH 78578)).